Consider the following 319-residue polypeptide: Cytochrome c biogenesis protein CcsA (319 aa).

7 helical membrane-spanning segments follow: residues 9–29 (ILTH…LITL), 44–64 (GVIG…AYSG), 71–91 (LYES…FPYF), 143–163 (MVLG…LLVI), 225–245 (IISL…VWAN), 259–273 (TWAF…IYLH), and 286–306 (AIVA…VNLL).

It belongs to the CcmF/CycK/Ccl1/NrfE/CcsA family. In terms of assembly, may interact with Ccs1.

It is found in the plastid. Its subcellular location is the chloroplast thylakoid membrane. Functionally, required during biogenesis of c-type cytochromes (cytochrome c6 and cytochrome f) at the step of heme attachment. This is Cytochrome c biogenesis protein CcsA from Oenothera biennis (German evening primrose).